We begin with the raw amino-acid sequence, 542 residues long: GATA-type transcription factor sreA (542 aa).

A compositionally biased stretch (polar residues) spans 1 to 10 (MLTLRSSSDT). The segment at 1-172 (MLTLRSSSDT…SAQNASGCGS (172 aa)) is disordered. Residues 44 to 63 (ADLRPDSFDASRSPDGDKAS) show a composition bias toward basic and acidic residues. Low complexity-rich tracts occupy residues 75–117 (SSDQ…PKAS) and 148–168 (SSTSDPRASPAASDASAQNAS). Residues 178-196 (CPGGGSCNGTGGAVGCDGC) form a cystein-rich region (CRR) region. Low complexity predominate over residues 210 to 223 (APSARQARASPSAQ). Positions 210–248 (APSARQARASPSAQTSEEQAQSGLDALDSASQDASGMPK) are disordered. A GATA-type zinc finger spans residues 250 to 274 (CQNCGTTLTPLWRRDDQGNTICNAC). The segment covering 289-300 (MKKTVIKRRKRV) has biased composition (basic residues). 2 disordered regions span residues 289–408 (MKKT…PATR) and 461–525 (SNAP…REAE). Polar residues-rich tracts occupy residues 311-320 (AGSSDNSSVS) and 369-387 (KPTQSTSSPGLNTLINHSP). Low complexity predominate over residues 396–407 (ESTSAESAPPAT). Positions 464–483 (PARSQTQTQPQPGTRSYSPN) are enriched in polar residues. Residues 510 to 542 (DKVKAARRAQLQREAENMREALRAKERELASLK) adopt a coiled-coil conformation.

It is found in the nucleus. Functionally, GATA-type transcription repressor that regulates iron acquisition genes through specific binding the GATA sequence elements of target promoters. SreA targets include genes encoding a number of key iron-regulated factors such as the siderophore biosynthesis genes. Is dispensable for growth on keratin substrates. SreA represses the expression of hapX and the siderophore system during iron sufficient conditions by an iron-sensing mechanism, while hapX represses sreA and activates the siderophore system during iron-limiting conditions resulting in efficient iron uptake and inhibition of iron-consuming pathways. The polypeptide is GATA-type transcription factor sreA (Arthroderma benhamiae (strain ATCC MYA-4681 / CBS 112371) (Trichophyton mentagrophytes)).